Reading from the N-terminus, the 306-residue chain is Glutathione transport system permease protein GsiC (306 aa).

Residues 1–8 (MLNYVIKR) lie on the Cytoplasmic side of the membrane. The chain crosses the membrane as a helical span at residues 9-29 (LLGLIPTLFIVSVLVFLFVHM). Over 30–102 (LPGDPARLIA…SRFMPTLWLT (73 aa)) the chain is Periplasmic. The region spanning 95 to 292 (FMPTLWLTIT…LEFILINLVV (198 aa)) is the ABC transmembrane type-1 domain. The helical transmembrane segment at 103–123 (ITSMVWAVIFGMAAGIIAAVW) threads the bilayer. Topologically, residues 124–134 (RNRWPDRLSMT) are cytoplasmic. The helical transmembrane segment at 135 to 155 (IAVSGISFPAFALGMLLIQVF) threads the bilayer. At 156–168 (SVELGWLPTVGAD) the chain is on the periplasmic side. Residues 169–189 (SWQHYILPSLTLGAAVAAVMA) form a helical membrane-spanning segment. Residues 190-228 (RFTRASFVDVLSEDYMRTARAKGVSETWVVLKHGLRNAM) are Cytoplasmic-facing. Residues 229–249 (IPVVTMMGLQFGFLLGGSIVV) traverse the membrane as a helical segment. Residues 250–277 (EKVFNWPGLGRLLVDSVEMRDYPVIQAE) lie on the Periplasmic side of the membrane. Residues 278-298 (ILLFSLEFILINLVVDVLYAA) form a helical membrane-spanning segment. Residues 299-306 (INPAIRYK) are Cytoplasmic-facing.

This sequence belongs to the binding-protein-dependent transport system permease family. As to quaternary structure, the complex is composed of two ATP-binding proteins (GsiA), two transmembrane proteins (GsiC and GsiD) and a solute-binding protein (GsiB).

The protein resides in the cell inner membrane. In terms of biological role, part of the ABC transporter complex GsiABCD involved in glutathione import. Probably responsible for the translocation of the substrate across the membrane. This chain is Glutathione transport system permease protein GsiC, found in Escherichia coli O6:H1 (strain CFT073 / ATCC 700928 / UPEC).